A 165-amino-acid chain; its full sequence is 2-C-methyl-D-erythritol 2,4-cyclodiphosphate synthase (165 aa).

The a divalent metal cation site is built by Asp8 and His10. Residues 8-10 (DVH) and 34-35 (HS) each bind 4-CDP-2-C-methyl-D-erythritol 2-phosphate. His42 contributes to the a divalent metal cation binding site. 4-CDP-2-C-methyl-D-erythritol 2-phosphate-binding positions include 56–58 (DIG), 61–65 (FPDTD), 100–106 (AQAPKMA), 132–135 (TTTE), Phe139, and Arg142.

This sequence belongs to the IspF family. As to quaternary structure, homotrimer. A divalent metal cation serves as cofactor.

The catalysed reaction is 4-CDP-2-C-methyl-D-erythritol 2-phosphate = 2-C-methyl-D-erythritol 2,4-cyclic diphosphate + CMP. It participates in isoprenoid biosynthesis; isopentenyl diphosphate biosynthesis via DXP pathway; isopentenyl diphosphate from 1-deoxy-D-xylulose 5-phosphate: step 4/6. Its function is as follows. Involved in the biosynthesis of isopentenyl diphosphate (IPP) and dimethylallyl diphosphate (DMAPP), two major building blocks of isoprenoid compounds. Catalyzes the conversion of 4-diphosphocytidyl-2-C-methyl-D-erythritol 2-phosphate (CDP-ME2P) to 2-C-methyl-D-erythritol 2,4-cyclodiphosphate (ME-CPP) with a corresponding release of cytidine 5-monophosphate (CMP). This Pectobacterium atrosepticum (strain SCRI 1043 / ATCC BAA-672) (Erwinia carotovora subsp. atroseptica) protein is 2-C-methyl-D-erythritol 2,4-cyclodiphosphate synthase.